A 1365-amino-acid chain; its full sequence is Patatin-like phospholipase domain-containing protein 6 (1365 aa).

Residues 1 to 50 (MGTSSHGLATNSSGAKVAERDGFQDVPAPGEGAAGRICGAQPVPFVPQVL) lie on the Lumenal side of the membrane. N-linked (GlcNAc...) asparagine glycosylation is present at Asn11. Residues 51–71 (GVMIGAGVAVVVTAVLILLVV) traverse the membrane as a helical segment. At 72–1365 (RRLRVPKTPA…QEPPGSATDA (1294 aa)) the chain is on the cytoplasmic side. 186–313 (VLGHFEKPLF…VRVVQIIMVR (128 aa)) contacts a nucleoside 3',5'-cyclic phosphate. Disordered stretches follow at residues 343–427 (FPSP…RSDF) and 441–463 (QEGASGGSLAAPARTPTQEPREQ). Phosphoserine is present on Ser345. Residues 350–367 (TRTSPVRGSKRMVSTSAT) are compositionally biased toward polar residues. Residue Thr352 is modified to Phosphothreonine. Phosphoserine occurs at positions 353 and 363. Over residues 375–389 (GRPPDPTGAPLPGPT) the composition is skewed to pro residues. A Phosphoserine modification is found at Ser411. At Thr455 the chain carries Phosphothreonine. Residues 502–624 (ELAK…VAAR) and 620–740 (TVAA…LSQK) contribute to the a nucleoside 3',5'-cyclic phosphate site. The PNPLA domain occupies 971-1137 (LVLGGGGARG…INNLPADIAR (167 aa)). The short motif at 975-980 (GGGARG) is the GXGXXG element. Residues 1002–1006 (GTSIG) carry the GXSXG motif. Ser1004 (nucleophile) is an active-site residue. The active-site Proton acceptor is Asp1124. Positions 1124–1126 (DGG) match the DGA/G motif. Residues 1296–1365 (SYVSDGCADG…QEPPGSATDA (70 aa)) form a disordered region. The span at 1303–1319 (ADGEESDCLTEYEEDAG) shows a compositional bias: acidic residues.

Belongs to the NTE family. Glycosylated.

It is found in the endoplasmic reticulum membrane. It carries out the reaction a 1-acyl-sn-glycero-3-phosphocholine + H2O = sn-glycerol 3-phosphocholine + a fatty acid + H(+). The catalysed reaction is 1-hexadecanoyl-sn-glycero-3-phosphocholine + H2O = sn-glycerol 3-phosphocholine + hexadecanoate + H(+). The enzyme catalyses 1-(9Z-octadecenoyl)-sn-glycero-3-phosphocholine + H2O = sn-glycerol 3-phosphocholine + (9Z)-octadecenoate + H(+). It catalyses the reaction 1-hexadecanoylglycerol + H2O = glycerol + hexadecanoate + H(+). It carries out the reaction 2-hexadecanoylglycerol + H2O = glycerol + hexadecanoate + H(+). The catalysed reaction is 1-(9Z-octadecenoyl)-glycerol + H2O = glycerol + (9Z)-octadecenoate + H(+). The enzyme catalyses 2-(9Z-octadecenoyl)-glycerol + H2O = glycerol + (9Z)-octadecenoate + H(+). It catalyses the reaction 2-(5Z,8Z,11Z,14Z-eicosatetraenoyl)-glycerol + H2O = glycerol + (5Z,8Z,11Z,14Z)-eicosatetraenoate + H(+). It carries out the reaction 1-hexadecanoyl-sn-glycero-3-phosphate + H2O = sn-glycerol 3-phosphate + hexadecanoate + H(+). Inhibited by a series a OPs such as mipafox (MPX), phenyl saligenin phosphate (PSP), phenyl dipentyl phosphinate (PDPP), diisopropyl fluorophosphate and paraoxon. In terms of biological role, phospholipase B that deacylates intracellular phosphatidylcholine (PtdCho), generating glycerophosphocholine (GroPtdCho). This deacylation occurs at both sn-2 and sn-1 positions of PtdCho. Catalyzes the hydrolysis of several naturally occurring membrane-associated lipids. Hydrolyzes lysophospholipids and monoacylglycerols, preferring the 1-acyl to the 2-acyl isomer. Does not catalyze hydrolysis of di- or triacylglycerols or fatty acid amides. In Pongo abelii (Sumatran orangutan), this protein is Patatin-like phospholipase domain-containing protein 6 (PNPLA6).